A 190-amino-acid polypeptide reads, in one-letter code: Imidazoleglycerol-phosphate dehydratase (190 aa).

This sequence belongs to the imidazoleglycerol-phosphate dehydratase family.

The protein localises to the cytoplasm. It catalyses the reaction D-erythro-1-(imidazol-4-yl)glycerol 3-phosphate = 3-(imidazol-4-yl)-2-oxopropyl phosphate + H2O. Its pathway is amino-acid biosynthesis; L-histidine biosynthesis; L-histidine from 5-phospho-alpha-D-ribose 1-diphosphate: step 6/9. In Wolinella succinogenes (strain ATCC 29543 / DSM 1740 / CCUG 13145 / JCM 31913 / LMG 7466 / NCTC 11488 / FDC 602W) (Vibrio succinogenes), this protein is Imidazoleglycerol-phosphate dehydratase.